Reading from the N-terminus, the 327-residue chain is Ornithine carbamoyltransferase, mitochondrial (327 aa).

Carbamoyl phosphate-binding positions include 63–66 (STRT), Arg-114, His-141, and Gln-144. 4 residues coordinate L-ornithine: Asn-172, Asp-236, Ser-240, and Met-241. The active-site Proton acceptor is Cys-276. Carbamoyl phosphate-binding positions include 276–277 (CL) and Arg-303.

It belongs to the aspartate/ornithine carbamoyltransferase superfamily. OTCase family. As to quaternary structure, interacts with trx2.

The protein resides in the mitochondrion matrix. It carries out the reaction carbamoyl phosphate + L-ornithine = L-citrulline + phosphate + H(+). It functions in the pathway amino-acid biosynthesis; L-arginine biosynthesis; L-arginine from L-ornithine and carbamoyl phosphate: step 1/3. Functionally, ornithine carbamoyltransferase involved in the synthesis of arginine from glutamate via ornithine and the urea cycle. This chain is Ornithine carbamoyltransferase, mitochondrial (arg3), found in Schizosaccharomyces pombe (strain 972 / ATCC 24843) (Fission yeast).